The primary structure comprises 183 residues: ATP synthase subunit b, chloroplastic (183 aa).

A helical transmembrane segment spans residues 25 to 45; sequence DILATNLINLTVVVGVLIFFG.

Belongs to the ATPase B chain family. In terms of assembly, F-type ATPases have 2 components, F(1) - the catalytic core - and F(0) - the membrane proton channel. F(1) has five subunits: alpha(3), beta(3), gamma(1), delta(1), epsilon(1). F(0) has four main subunits: a(1), b(1), b'(1) and c(10-14). The alpha and beta chains form an alternating ring which encloses part of the gamma chain. F(1) is attached to F(0) by a central stalk formed by the gamma and epsilon chains, while a peripheral stalk is formed by the delta, b and b' chains.

The protein localises to the plastid. It is found in the chloroplast thylakoid membrane. F(1)F(0) ATP synthase produces ATP from ADP in the presence of a proton or sodium gradient. F-type ATPases consist of two structural domains, F(1) containing the extramembraneous catalytic core and F(0) containing the membrane proton channel, linked together by a central stalk and a peripheral stalk. During catalysis, ATP synthesis in the catalytic domain of F(1) is coupled via a rotary mechanism of the central stalk subunits to proton translocation. In terms of biological role, component of the F(0) channel, it forms part of the peripheral stalk, linking F(1) to F(0). In Saccharum hybrid (Sugarcane), this protein is ATP synthase subunit b, chloroplastic.